A 428-amino-acid polypeptide reads, in one-letter code: Putative ankyrin repeat protein FPV234 (428 aa).

ANK repeat units follow at residues 6 to 35 (KDDILICEAIENYDSESLRNILENGADPNV), 39 to 68 (YQYSHLHNAIEKKNGSAVSLLLKHGADPNI), 71 to 100 (FFTPPLHKAIKKGCVDIARSLLEYGAIVNL), 103 to 132 (YCLKPIHIAANRTESKIVKLLIEYGADINS), 137 to 169 (NGKYPIHYAMKVYDPFRLKIIKVLLDHGADINK), 174 to 202 (TNTSPLYETRFITDDLLDYIISRGANINI), 206 to 238 (MGRNILHEIILRNGYNDFSNILVLIDHGADINA), and 242 to 271 (EGNTPFMLHTINNNAIILANYIVSLYYLSY).

The polypeptide is Putative ankyrin repeat protein FPV234 (Fowlpox virus (strain NVSL) (FPV)).